Here is a 129-residue protein sequence, read N- to C-terminus: Glycine cleavage system H protein (129 aa).

A Lipoyl-binding domain is found at 24–106 (LLKIGVSEFA…IGEGWLVILK (83 aa)). At K65 the chain carries N6-lipoyllysine.

This sequence belongs to the GcvH family. The glycine cleavage system is composed of four proteins: P, T, L and H. The cofactor is (R)-lipoate.

Functionally, the glycine cleavage system catalyzes the degradation of glycine. The H protein shuttles the methylamine group of glycine from the P protein to the T protein. The protein is Glycine cleavage system H protein of Prochlorococcus marinus (strain MIT 9312).